Reading from the N-terminus, the 359-residue chain is Chondroadherin (359 aa).

The first 22 residues, 1–22 (MVRPMLLLSLGLLAGLLPALAA), serve as a signal peptide directing secretion. A disulfide bridge connects residues Cys23 and Cys38. Residues 23 to 52 (CPQNCHCHSDLQHVICDKVGLQKIPKVSEK) form the LRRNT domain. LRR repeat units follow at residues 76–97 (NLVS…AFRG), 100–121 (QLIY…AFDD), 124–145 (ELTY…LLSP), 148–169 (NLFI…AFQG), 172–193 (DLRW…ALDD), 196–217 (NLAK…ALSK), 220–241 (VVEE…AFQS), 245–266 (YLET…AFLG), and 269–290 (TLKH…FPFD). An O-linked (GalNAc...) serine glycan is attached at Ser144. The LRRCT domain occupies 300-348 (NPWKCTCQLRGLRRWLEAKASRPDATCASPAKFKGQHIRDTDAFRSCKF). 2 disulfides stabilise this stretch: Cys304–Cys346 and Cys306–Cys326.

Belongs to the small leucine-rich proteoglycan (SLRP) family. SLRP class IV subfamily. In terms of assembly, mostly monomeric. Interacts with collagen type II. In terms of tissue distribution, present in chondrocytes at all ages.

Its subcellular location is the secreted. The protein localises to the extracellular space. It is found in the extracellular matrix. In terms of biological role, promotes attachment of chondrocytes, fibroblasts, and osteoblasts. This binding is mediated (at least for chondrocytes and fibroblasts) by the integrin alpha(2)beta(1). May play an important role in the regulation of chondrocyte growth and proliferation. This chain is Chondroadherin (CHAD), found in Homo sapiens (Human).